Consider the following 359-residue polypeptide: Putative nucleotidyltransferase MAB21L1 (359 aa).

A ribonucleoside 5'-triphosphate-binding positions include 23–24 (RK) and 63–66 (YEGL). Mg(2+) contacts are provided by Glu73 and Glu75. A ribonucleoside 5'-triphosphate contacts are provided by residues Lys248 and 252-255 (SLLK).

The protein belongs to the mab-21 family. Monomer. Homodecamer; composed of 2 back to back homopentamers. The protein may exist as monomer in solution and oiligomerizes upon ligand binding.

The protein resides in the nucleus. Putative nucleotidyltransferase required for several aspects of embryonic development including normal development of the eye. It is unclear whether it displays nucleotidyltransferase activity in vivo. Binds single-stranded RNA (ssRNA). This Xenopus laevis (African clawed frog) protein is Putative nucleotidyltransferase MAB21L1 (mab21l1).